Here is a 387-residue protein sequence, read N- to C-terminus: Small ribosomal subunit protein uS5m (387 aa).

The transit peptide at 1–22 (MLRSFSHFLQIGSRRQPTYFRC) directs the protein to the mitochondrion. The segment at 33 to 87 (FKNDPKKELNSNLNEKSVEESSKNETKEQFNSSSIPRESESEGKTASNTSPLSPK) is disordered. Basic and acidic residues predominate over residues 48–60 (KSVEESSKNETKE). Ser85 is subject to Phosphoserine. Positions 225–288 (LMFVPLVRRR…GRAVKNMVYI (64 aa)) constitute an S5 DRBM domain.

This sequence belongs to the universal ribosomal protein uS5 family. In terms of assembly, component of the mitochondrial small ribosomal subunit (mt-SSU). Mature yeast 74S mitochondrial ribosomes consist of a small (37S) and a large (54S) subunit. The 37S small subunit contains a 15S ribosomal RNA (15S mt-rRNA) and at least 32 different proteins. The 54S large subunit contains a 21S rRNA (21S mt-rRNA) and at least 45 different proteins. uS3m, uS4m and uS5m form the narrow entry site of the mRNA channel.

It is found in the mitochondrion. In terms of biological role, component of the mitochondrial ribosome (mitoribosome), a dedicated translation machinery responsible for the synthesis of mitochondrial genome-encoded proteins, including at least some of the essential transmembrane subunits of the mitochondrial respiratory chain. The mitoribosomes are attached to the mitochondrial inner membrane and translation products are cotranslationally integrated into the membrane. The chain is Small ribosomal subunit protein uS5m (mrp5) from Schizosaccharomyces pombe (strain 972 / ATCC 24843) (Fission yeast).